A 216-amino-acid chain; its full sequence is Probable flavin-dependent thymidylate synthase (216 aa).

The ThyX domain occupies 1–216; sequence MSAKLISVTK…PSIAKALDWV (216 aa). Residues Ser-55, 78–80, and Glu-86 each bind FAD; that span reads RHR. DUMP contacts are provided by residues 75–78, 86–90, and Arg-155; these read QVLR and EFSQR. The ThyX motif signature appears at 78 to 88; the sequence is RHRSFHFQEFS. Residue His-177 coordinates FAD. Residue Arg-182 coordinates dUMP. Arg-182 functions as the Involved in ionization of N3 of dUMP, leading to its activation in the catalytic mechanism.

It belongs to the thymidylate synthase ThyX family. As to quaternary structure, homotetramer. The cofactor is FAD.

The catalysed reaction is dUMP + (6R)-5,10-methylene-5,6,7,8-tetrahydrofolate + NADPH + H(+) = dTMP + (6S)-5,6,7,8-tetrahydrofolate + NADP(+). It functions in the pathway pyrimidine metabolism; dTTP biosynthesis. Functionally, catalyzes the reductive methylation of 2'-deoxyuridine-5'-monophosphate (dUMP) to 2'-deoxythymidine-5'-monophosphate (dTMP) while utilizing 5,10-methylenetetrahydrofolate (mTHF) as the methyl donor, and NADPH and FADH(2) as the reductant. The polypeptide is Probable flavin-dependent thymidylate synthase (Paramecium bursaria Chlorella virus 1 (PBCV-1)).